The primary structure comprises 213 residues: ATP phosphoribosyltransferase (213 aa).

The protein belongs to the ATP phosphoribosyltransferase family. Short subfamily. As to quaternary structure, heteromultimer composed of HisG and HisZ subunits.

It is found in the cytoplasm. It catalyses the reaction 1-(5-phospho-beta-D-ribosyl)-ATP + diphosphate = 5-phospho-alpha-D-ribose 1-diphosphate + ATP. It functions in the pathway amino-acid biosynthesis; L-histidine biosynthesis; L-histidine from 5-phospho-alpha-D-ribose 1-diphosphate: step 1/9. Its function is as follows. Catalyzes the condensation of ATP and 5-phosphoribose 1-diphosphate to form N'-(5'-phosphoribosyl)-ATP (PR-ATP). Has a crucial role in the pathway because the rate of histidine biosynthesis seems to be controlled primarily by regulation of HisG enzymatic activity. This Bacillus subtilis (strain 168) protein is ATP phosphoribosyltransferase (hisG).